Consider the following 289-residue polypeptide: MEWSLTQDKLLAFHRLMRTDKPIGALLLLWPTLWALWVAAPGLPPLWILAVFVAGVWLMRAAGCVVNDYADRKFDGHVKRTANRPLPSGQVSEKEARTLFVVLVVLAFLLVLTLNTMTILLSVAALALAWVYPFMKRYTHLPQVVLGAAFGWSIPMAFAAVSESVPLSCWLMFLANILWAVAYDTQYAMVDRDDDLKIGIKSTAILFGRHDKLIIGILQVAVLALMVVIGRLNGLNWEFYWSVLVAGLLFAYQQKLIVRRDREACFKAFLNNNYVGLVLFLGLAMSYWS.

The next 7 helical transmembrane spans lie at 33–53 (LWAL…AVFV), 99–119 (LFVV…TMTI), 141–161 (LPQV…FAAV), 163–183 (ESVP…AVAY), 213–233 (LIIG…GRLN), 238–258 (EFYW…KLIV), and 268–288 (AFLN…MSYW).

This sequence belongs to the UbiA prenyltransferase family. The cofactor is Mg(2+).

The protein resides in the cell inner membrane. It carries out the reaction all-trans-octaprenyl diphosphate + 4-hydroxybenzoate = 4-hydroxy-3-(all-trans-octaprenyl)benzoate + diphosphate. It participates in cofactor biosynthesis; ubiquinone biosynthesis. Functionally, catalyzes the prenylation of para-hydroxybenzoate (PHB) with an all-trans polyprenyl group. Mediates the second step in the final reaction sequence of ubiquinone-8 (UQ-8) biosynthesis, which is the condensation of the polyisoprenoid side chain with PHB, generating the first membrane-bound Q intermediate 3-octaprenyl-4-hydroxybenzoate. This chain is 4-hydroxybenzoate octaprenyltransferase, found in Enterobacter sp. (strain 638).